Consider the following 217-residue polypeptide: MELKELQVKTRQMAGGPTPKALRRQGFVPAIVYGHKNDPLPLAVDDHTFRLLLKDAGQQALLSLVIDDGAASKTVMLKELQQHPVSLKLIHADFHEVDLTKKITTYVPVATTGVCKGEKEGGVLQLIRRELEVRCLPGLIPESIAIDISALDIGDSVHVADIEAPEGVELVHEVNFTVIAVAAPTKETVEDEEAEEAAAEGAEETGETGETEEGGDE.

The disordered stretch occupies residues 185-217 (TKETVEDEEAEEAAAEGAEETGETGETEEGGDE). Residues 189 to 217 (VEDEEAEEAAAEGAEETGETGETEEGGDE) show a composition bias toward acidic residues.

Belongs to the bacterial ribosomal protein bL25 family. CTC subfamily. As to quaternary structure, part of the 50S ribosomal subunit; part of the 5S rRNA/L5/L18/L25 subcomplex. Contacts the 5S rRNA. Binds to the 5S rRNA independently of L5 and L18.

Functionally, this is one of the proteins that binds to the 5S RNA in the ribosome where it forms part of the central protuberance. This Desulfosudis oleivorans (strain DSM 6200 / JCM 39069 / Hxd3) (Desulfococcus oleovorans) protein is Large ribosomal subunit protein bL25.